The chain runs to 215 residues: Pyrrolidone-carboxylate peptidase (215 aa).

Residues glutamate 80, cysteine 143, and histidine 167 contribute to the active site.

It belongs to the peptidase C15 family. Homotetramer.

The protein resides in the cytoplasm. The enzyme catalyses Release of an N-terminal pyroglutamyl group from a polypeptide, the second amino acid generally not being Pro.. Functionally, removes 5-oxoproline from various penultimate amino acid residues except L-proline. The chain is Pyrrolidone-carboxylate peptidase from Bacillus anthracis.